The chain runs to 105 residues: Heme oxygenase (mycobilin-producing) (105 aa).

In terms of domain architecture, ABM spans Val-3–Phe-92. Residues Arg-22 to Arg-26, His-75, and Val-83 to Gly-86 each bind heme.

Belongs to the antibiotic biosynthesis monooxygenase family. Homodimer.

The catalysed reaction is heme b + 3 AH2 + 3 O2 + 2 H(+) = mycobilin a + Fe(2+) + 3 A + 3 H2O. It carries out the reaction heme b + 3 AH2 + 3 O2 + 2 H(+) = mycobilin b + Fe(2+) + 3 A + 3 H2O. Its function is as follows. Catalyzes the oxidative degradation of the heme macrocyclic porphyrin ring in the presence of a suitable electron donor such as ascorbate or NADPH--cytochrome P450 reductase, with subsequent release of free iron. This chain is Heme oxygenase (mycobilin-producing) (mhuD), found in Mycobacterium tuberculosis (strain CDC 1551 / Oshkosh).